A 189-amino-acid chain; its full sequence is Adenylate kinase (189 aa).

Residue 10–15 coordinates ATP; the sequence is AAGKGT. An NMP region spans residues 30 to 59; that stretch reads STGDMLRAAIASGSELGQKVKGVLDRGELV. AMP is bound by residues T31, R36, 57-59, 85-88, and Q92; these read ELV and GFPR. The interval 126-136 is LID; that stretch reads KRFAEQGRPDD. R127 is an ATP binding site. The AMP site is built by R133 and R144. ATP is bound at residue A172.

This sequence belongs to the adenylate kinase family. Monomer.

It localises to the cytoplasm. It carries out the reaction AMP + ATP = 2 ADP. The protein operates within purine metabolism; AMP biosynthesis via salvage pathway; AMP from ADP: step 1/1. In terms of biological role, catalyzes the reversible transfer of the terminal phosphate group between ATP and AMP. Plays an important role in cellular energy homeostasis and in adenine nucleotide metabolism. The chain is Adenylate kinase from Caulobacter sp. (strain K31).